Here is a 366-residue protein sequence, read N- to C-terminus: Anthranilate phosphoribosyltransferase (366 aa).

5-phospho-alpha-D-ribose 1-diphosphate-binding positions include Gly-79, 82–83, Thr-87, 89–92, 107–115, and Ser-119; these read GD, NIST, and KHGNRAATS. Gly-79 lines the anthranilate pocket. Residue Ser-91 participates in Mg(2+) binding. An anthranilate-binding site is contributed by Asn-110. Arg-165 is an anthranilate binding site. Mg(2+) is bound by residues Asp-223 and Glu-224. Residues 342 to 366 form a disordered region; it reads ESLSGKSMSMRSRTSILSPASGERV. The span at 345–359 shows a compositional bias: polar residues; that stretch reads SGKSMSMRSRTSILS.

The protein belongs to the anthranilate phosphoribosyltransferase family. As to quaternary structure, homodimer. Requires Mg(2+) as cofactor.

The catalysed reaction is N-(5-phospho-beta-D-ribosyl)anthranilate + diphosphate = 5-phospho-alpha-D-ribose 1-diphosphate + anthranilate. It participates in amino-acid biosynthesis; L-tryptophan biosynthesis; L-tryptophan from chorismate: step 2/5. Functionally, catalyzes the transfer of the phosphoribosyl group of 5-phosphorylribose-1-pyrophosphate (PRPP) to anthranilate to yield N-(5'-phosphoribosyl)-anthranilate (PRA). The chain is Anthranilate phosphoribosyltransferase from Methanosarcina barkeri (strain Fusaro / DSM 804).